The sequence spans 122 residues: Large ribosomal subunit protein bL12 (122 aa).

Belongs to the bacterial ribosomal protein bL12 family. As to quaternary structure, homodimer. Part of the ribosomal stalk of the 50S ribosomal subunit. Forms a multimeric L10(L12)X complex, where L10 forms an elongated spine to which 2 to 4 L12 dimers bind in a sequential fashion. Binds GTP-bound translation factors.

Forms part of the ribosomal stalk which helps the ribosome interact with GTP-bound translation factors. Is thus essential for accurate translation. The chain is Large ribosomal subunit protein bL12 from Enterococcus faecalis (strain ATCC 700802 / V583).